A 118-amino-acid chain; its full sequence is Beta-2-microglobulin (118 aa).

An N-terminal signal peptide occupies residues Met1 to Ala20. The region spanning Pro25–Val112 is the Ig-like C1-type domain. Cysteines 45 and 99 form a disulfide.

The protein belongs to the beta-2-microglobulin family. In terms of assembly, heterodimer of an alpha chain and a beta chain. Beta-2-microglobulin is the beta-chain of major histocompatibility complex class I molecules.

The protein localises to the secreted. Functionally, component of the class I major histocompatibility complex (MHC). Involved in the presentation of peptide antigens to the immune system. This chain is Beta-2-microglobulin (B2M), found in Sus scrofa (Pig).